Here is a 202-residue protein sequence, read N- to C-terminus: Matrix protein (202 aa).

Residues 12-33 (RDEDTQKPSPVSAPPDDDDLWL) are disordered. The PPXY motif signature appears at 35 to 38 (PPEY). The segment at 115–151 (KLRRTLIFQWADSRGPLEGEELEYSQEITWDDDTEFV) is essential for glycoprotein binding.

Belongs to the lyssavirus matrix protein family. In terms of assembly, homomultimer. Interacts with nucleoprotein and with the cytoplasmic domain of glycoprotein. Interacts with host ATP6V1A; this interaction plays an important role in virion uncoating after viral entry.

The protein resides in the virion membrane. The protein localises to the host endomembrane system. It is found in the host cytoplasm. Its function is as follows. Plays a major role in assembly, budding and uncoating of virion after membrane fusion. Completely covers the ribonucleoprotein coil and keep it in condensed bullet-shaped form. Inhibits viral transcription and stimulates replication. Plays a major role in early induction of TRAIL-mediated apoptosis in infected neurons. Inhibits the integrated stress response (ISR) in the infected cell by blocking the formation of stress granules. This Rabies virus (strain PM1503/AVO1) (RABV) protein is Matrix protein (M).